The following is a 229-amino-acid chain: N-(5'-phosphoribosyl)anthranilate isomerase (229 aa).

It belongs to the TrpF family.

It carries out the reaction N-(5-phospho-beta-D-ribosyl)anthranilate = 1-(2-carboxyphenylamino)-1-deoxy-D-ribulose 5-phosphate. It participates in amino-acid biosynthesis; L-tryptophan biosynthesis; L-tryptophan from chorismate: step 3/5. This is N-(5'-phosphoribosyl)anthranilate isomerase from Clostridium beijerinckii (strain ATCC 51743 / NCIMB 8052) (Clostridium acetobutylicum).